A 64-amino-acid polypeptide reads, in one-letter code: Conotoxin Ts-011 (64 aa).

A signal peptide spans 1-22 (MHCLPVLVILLLLIASTPSVDA). The propeptide occupies 23 to 51 (RPKTKDDVPLASFHGADNANRILRTLWNL). The residue at position 63 (Ile63) is an Isoleucine amide.

Belongs to the conotoxin T superfamily. In terms of processing, contains 2 disulfide bonds that can be either 'C1-C3, C2-C4' or 'C1-C4, C2-C3', since these disulfide connectivities have been observed for conotoxins with cysteine framework V (for examples, see AC P0DQQ7 and AC P81755). As to expression, expressed by the venom duct.

It localises to the secreted. This Conus tessulatus (Tessellate cone) protein is Conotoxin Ts-011.